We begin with the raw amino-acid sequence, 217 residues long: Probable transaldolase (217 aa).

Lys-83 acts as the Schiff-base intermediate with substrate in catalysis.

Belongs to the transaldolase family. Type 3B subfamily.

The protein localises to the cytoplasm. The catalysed reaction is D-sedoheptulose 7-phosphate + D-glyceraldehyde 3-phosphate = D-erythrose 4-phosphate + beta-D-fructose 6-phosphate. It participates in carbohydrate degradation; pentose phosphate pathway; D-glyceraldehyde 3-phosphate and beta-D-fructose 6-phosphate from D-ribose 5-phosphate and D-xylulose 5-phosphate (non-oxidative stage): step 2/3. Transaldolase is important for the balance of metabolites in the pentose-phosphate pathway. The sequence is that of Probable transaldolase from Bartonella bacilliformis (strain ATCC 35685 / KC583 / Herrer 020/F12,63).